The following is a 470-amino-acid chain: 6-phospho-beta-galactosidase (470 aa).

Residues glutamine 19, histidine 116, asparagine 159, glutamate 160, and asparagine 297 each contribute to the D-galactose 6-phosphate site. Catalysis depends on glutamate 160, which acts as the Proton donor. Glutamate 375 functions as the Nucleophile in the catalytic mechanism. D-galactose 6-phosphate-binding residues include serine 430, tryptophan 431, lysine 437, and tyrosine 439.

This sequence belongs to the glycosyl hydrolase 1 family.

It catalyses the reaction a 6-phospho-beta-D-galactoside + H2O = D-galactose 6-phosphate + an alcohol. It participates in carbohydrate metabolism; lactose degradation; D-galactose 6-phosphate and beta-D-glucose from lactose 6-phosphate: step 1/1. This is 6-phospho-beta-galactosidase from Staphylococcus epidermidis (strain ATCC 35984 / DSM 28319 / BCRC 17069 / CCUG 31568 / BM 3577 / RP62A).